A 466-amino-acid polypeptide reads, in one-letter code: Ribulose bisphosphate carboxylase large chain (466 aa).

Lys4 is subject to N6,N6,N6-trimethyllysine. Substrate is bound by residues Asn113 and Thr163. The active-site Proton acceptor is Lys165. Lys167 contacts substrate. 3 residues coordinate Mg(2+): Lys191, Asp193, and Glu194. N6-carboxylysine is present on Lys191. His284 acts as the Proton acceptor in catalysis. 3 residues coordinate substrate: Arg285, His317, and Ser369.

This sequence belongs to the RuBisCO large chain family. Type I subfamily. Heterohexadecamer of 8 large chains and 8 small chains; disulfide-linked. The disulfide link is formed within the large subunit homodimers. Requires Mg(2+) as cofactor. In terms of processing, the disulfide bond which can form in the large chain dimeric partners within the hexadecamer appears to be associated with oxidative stress and protein turnover.

The protein resides in the plastid. The protein localises to the chloroplast. The catalysed reaction is 2 (2R)-3-phosphoglycerate + 2 H(+) = D-ribulose 1,5-bisphosphate + CO2 + H2O. It carries out the reaction D-ribulose 1,5-bisphosphate + O2 = 2-phosphoglycolate + (2R)-3-phosphoglycerate + 2 H(+). Functionally, ruBisCO catalyzes two reactions: the carboxylation of D-ribulose 1,5-bisphosphate, the primary event in carbon dioxide fixation, as well as the oxidative fragmentation of the pentose substrate in the photorespiration process. Both reactions occur simultaneously and in competition at the same active site. This chain is Ribulose bisphosphate carboxylase large chain, found in Proboscidea louisianica (Louisiana Devil's-claw).